A 334-amino-acid polypeptide reads, in one-letter code: ELMO domain-containing protein 1 (334 aa).

The ELMO domain maps to 133-314 (QHEEMLLKLW…KFRKRIIKQL (182 aa)).

Its function is as follows. Acts as a GTPase-activating protein (GAP) toward guanine nucleotide exchange factors like ARL2, ARL3, ARF1 and ARF6, but not for GTPases outside the Arf family. The sequence is that of ELMO domain-containing protein 1 (ELMOD1) from Homo sapiens (Human).